We begin with the raw amino-acid sequence, 257 residues long: Flap endonuclease Xni (257 aa).

Asp-109 provides a ligand contact to Mg(2+). The 5'-3' exonuclease domain maps to Leu-165–Lys-255. Residues Leu-176, Ala-177, Ile-187, and Ile-190 each contribute to the K(+) site. The interaction with DNA stretch occupies residues Gly-189 to Ala-194.

Belongs to the Xni family. Mg(2+) is required as a cofactor. The cofactor is K(+).

In terms of biological role, has flap endonuclease activity. During DNA replication, flap endonucleases cleave the 5'-overhanging flap structure that is generated by displacement synthesis when DNA polymerase encounters the 5'-end of a downstream Okazaki fragment. This chain is Flap endonuclease Xni, found in Aliivibrio salmonicida (strain LFI1238) (Vibrio salmonicida (strain LFI1238)).